Here is a 526-residue protein sequence, read N- to C-terminus: Dye-decolorizing peroxidase (526 aa).

Positions 1–21 (MRKSISTFILLSVLSVGQLVA) are cleaved as a signal peptide. The propeptide occupies 22-63 (ARPRSTNAPPRRRTPQPRRTTSLFINPPALPDLPTVQAVDKL). The N-linked (GlcNAc...) asparagine glycan is linked to Asn186. Residue Asp231 is the Proton acceptor of the active site. Residue Asn367 is glycosylated (N-linked (GlcNAc...) asparagine). A heme-binding site is contributed by His376. Residues Asn473 and Asn484 are each glycosylated (N-linked (GlcNAc...) asparagine).

This sequence belongs to the DyP-type peroxidase family. Requires heme b as cofactor.

The protein resides in the secreted. It carries out the reaction Reactive Blue 5 + 2 H2O2 = 2,2'-disulfonyl azobenzene + 3-[(4-amino-6-chloro-1,3,5-triazin-2-yl)amino]benzenesulfonate + phthalate + 2 H2O + 2 H(+). The catalysed reaction is 2 a phenolic donor + H2O2 = 2 a phenolic radical donor + 2 H2O. In terms of biological role, manganese-independent peroxidase that is able to convert a large number of compounds, but its physiological substrate is not known. In addition to classic peroxidase substrates (e.g. 2,6-dimethoxyphenol), oxidizes dyes such as Reactive Blue 5 and Reactive Black 5. The sequence is that of Dye-decolorizing peroxidase from Mycena epipterygia (Yellow-stemmed mycena).